Here is a 113-residue protein sequence, read N- to C-terminus: Putative anti-sigma factor antagonist TM_1081 (113 aa).

Positions Met1–Val110 constitute an STAS domain. Position 55 is a phosphoserine (Ser55).

The protein belongs to the anti-sigma-factor antagonist family. Post-translationally, phosphorylated on a serine residue.

Functionally, in the phosphorylated form it could act as an anti-anti-sigma factor that counteracts an anti-sigma factor and thus releases a sigma factor from inhibition. This Thermotoga maritima (strain ATCC 43589 / DSM 3109 / JCM 10099 / NBRC 100826 / MSB8) protein is Putative anti-sigma factor antagonist TM_1081.